Reading from the N-terminus, the 220-residue chain is Putative GED domain-containing protein DNM1P46 (220 aa).

The interval 18–46 is disordered; the sequence is VSVETRNVKPQGKDSKAEENGSHSFMHSM. The segment covering 28 to 38 has biased composition (basic and acidic residues); it reads QGKDSKAEENG. Residues 54–149 form the GED domain; the sequence is METTQNLVDS…CCPTCTRLGT (96 aa). The interval 173-194 is disordered; it reads DTPGGVGRAGTAARRDSRGNEK. Positions 185–194 are enriched in basic and acidic residues; the sequence is ARRDSRGNEK.

This Homo sapiens (Human) protein is Putative GED domain-containing protein DNM1P46 (DNM1P46).